Reading from the N-terminus, the 159-residue chain is Bacterioferritin (159 aa).

The Ferritin-like diiron domain occupies M1–G145. 2 residues coordinate Fe cation: E18 and E51. M52 provides a ligand contact to heme b. Residues H54, E94, E127, and H130 each coordinate Fe cation.

Belongs to the bacterioferritin family. Homooligomer of 24 subunits, arranged as 12 dimers, that are packed together to form an approximately spherical molecule with a central cavity, in which large amounts of iron can be deposited. Requires heme b as cofactor.

It is found in the cytoplasm. The protein resides in the cytosol. It localises to the membrane. The enzyme catalyses 4 Fe(2+) + O2 + 4 H(+) = 4 Fe(3+) + 2 H2O. It catalyses the reaction Fe(2+)(in) = Fe(2+)(out). In terms of biological role, iron-storage protein, whose ferroxidase center binds Fe(2+), oxidizes it using dioxygen to Fe(3+), and participates in the subsequent Fe(3+) oxide mineral core formation within the central cavity of the BFR protein shell. Probably plays a crucial role in the intracellular existence of this organism by functioning as a temporary depository for iron in iron deprivation. In Mycobacterium leprae (strain TN), this protein is Bacterioferritin (bfr).